The chain runs to 330 residues: Ketol-acid reductoisomerase (NADP(+)) (330 aa).

The KARI N-terminal Rossmann domain maps to 2 to 182; the sequence is ARMYYDADAN…GGTRAGILET (181 aa). Residues 25-28, Ser-51, Ser-53, and 83-86 each bind NADP(+); these read YGSQ and DEFQ. His-108 is an active-site residue. Gly-134 contributes to the NADP(+) binding site. One can recognise a KARI C-terminal knotted domain in the interval 183 to 328; that stretch reads SFREETETDL…KDLRAMFSWL (146 aa). Positions 191, 195, 227, and 231 each coordinate Mg(2+). Ser-252 is a substrate binding site.

Belongs to the ketol-acid reductoisomerase family. The cofactor is Mg(2+).

It catalyses the reaction (2R)-2,3-dihydroxy-3-methylbutanoate + NADP(+) = (2S)-2-acetolactate + NADPH + H(+). It carries out the reaction (2R,3R)-2,3-dihydroxy-3-methylpentanoate + NADP(+) = (S)-2-ethyl-2-hydroxy-3-oxobutanoate + NADPH + H(+). It functions in the pathway amino-acid biosynthesis; L-isoleucine biosynthesis; L-isoleucine from 2-oxobutanoate: step 2/4. The protein operates within amino-acid biosynthesis; L-valine biosynthesis; L-valine from pyruvate: step 2/4. Functionally, involved in the biosynthesis of branched-chain amino acids (BCAA). Catalyzes an alkyl-migration followed by a ketol-acid reduction of (S)-2-acetolactate (S2AL) to yield (R)-2,3-dihydroxy-isovalerate. In the isomerase reaction, S2AL is rearranged via a Mg-dependent methyl migration to produce 3-hydroxy-3-methyl-2-ketobutyrate (HMKB). In the reductase reaction, this 2-ketoacid undergoes a metal-dependent reduction by NADPH to yield (R)-2,3-dihydroxy-isovalerate. The chain is Ketol-acid reductoisomerase (NADP(+)) from Synechococcus elongatus (strain ATCC 33912 / PCC 7942 / FACHB-805) (Anacystis nidulans R2).